The chain runs to 458 residues: Divalent metal cation transporter MntH (458 aa).

Helical transmembrane passes span 38-58 (GFWK…VGYM), 76-96 (SLLS…AMAA), 119-139 (GGFL…AEII), 151-171 (MPLI…LLLM), 180-200 (AVVA…VILA), 223-243 (MLYL…LFLG), 275-295 (LTMA…LFFG), 315-335 (IVGA…LLAS), 370-390 (LMSV…EAKI), 393-413 (LLTF…IPLV), and 437-457 (FISG…LGFV).

It belongs to the NRAMP family.

The protein localises to the cell membrane. H(+)-stimulated, divalent metal cation uptake system. The chain is Divalent metal cation transporter MntH from Lacticaseibacillus paracasei (strain ATCC 334 / BCRC 17002 / CCUG 31169 / CIP 107868 / KCTC 3260 / NRRL B-441) (Lactobacillus paracasei).